Here is a 318-residue protein sequence, read N- to C-terminus: UDP-3-O-acylglucosamine N-acyltransferase 1 (318 aa).

His230 acts as the Proton acceptor in catalysis.

Belongs to the transferase hexapeptide repeat family. LpxD subfamily. As to quaternary structure, homotrimer.

The enzyme catalyses a UDP-3-O-[(3R)-3-hydroxyacyl]-alpha-D-glucosamine + a (3R)-hydroxyacyl-[ACP] = a UDP-2-N,3-O-bis[(3R)-3-hydroxyacyl]-alpha-D-glucosamine + holo-[ACP] + H(+). It functions in the pathway bacterial outer membrane biogenesis; LPS lipid A biosynthesis. Its function is as follows. Catalyzes the N-acylation of UDP-3-O-acylglucosamine using 3-hydroxyacyl-ACP as the acyl donor. Is involved in the biosynthesis of lipid A, a phosphorylated glycolipid that anchors the lipopolysaccharide to the outer membrane of the cell. This Sulfurimonas denitrificans (strain ATCC 33889 / DSM 1251) (Thiomicrospira denitrificans (strain ATCC 33889 / DSM 1251)) protein is UDP-3-O-acylglucosamine N-acyltransferase 1.